The sequence spans 237 residues: DNA repair protein RecO (237 aa).

Belongs to the RecO family.

Involved in DNA repair and RecF pathway recombination. This chain is DNA repair protein RecO, found in Actinobacillus succinogenes (strain ATCC 55618 / DSM 22257 / CCUG 43843 / 130Z).